The sequence spans 210 residues: Large ribosomal subunit protein uL3 (210 aa).

This sequence belongs to the universal ribosomal protein uL3 family. Part of the 50S ribosomal subunit. Forms a cluster with proteins L14 and L19.

Functionally, one of the primary rRNA binding proteins, it binds directly near the 3'-end of the 23S rRNA, where it nucleates assembly of the 50S subunit. This Amoebophilus asiaticus (strain 5a2) protein is Large ribosomal subunit protein uL3.